The chain runs to 236 residues: 2-C-methyl-D-erythritol 4-phosphate cytidylyltransferase (236 aa).

It belongs to the IspD/TarI cytidylyltransferase family. IspD subfamily. In terms of assembly, homodimer.

It carries out the reaction 2-C-methyl-D-erythritol 4-phosphate + CTP + H(+) = 4-CDP-2-C-methyl-D-erythritol + diphosphate. The protein operates within isoprenoid biosynthesis; isopentenyl diphosphate biosynthesis via DXP pathway; isopentenyl diphosphate from 1-deoxy-D-xylulose 5-phosphate: step 2/6. Catalyzes the formation of 4-diphosphocytidyl-2-C-methyl-D-erythritol from CTP and 2-C-methyl-D-erythritol 4-phosphate (MEP). The sequence is that of 2-C-methyl-D-erythritol 4-phosphate cytidylyltransferase from Salmonella typhimurium (strain LT2 / SGSC1412 / ATCC 700720).